The chain runs to 327 residues: Glycerol-3-phosphate dehydrogenase [NAD(P)+] (327 aa).

NADPH is bound by residues tryptophan 16, arginine 36, and lysine 108. Residues lysine 108, glycine 136, and serine 138 each coordinate sn-glycerol 3-phosphate. Alanine 140 is a binding site for NADPH. Lysine 191, aspartate 244, serine 254, arginine 255, and asparagine 256 together coordinate sn-glycerol 3-phosphate. Lysine 191 acts as the Proton acceptor in catalysis. An NADPH-binding site is contributed by arginine 255. Residues leucine 274 and glutamate 276 each contribute to the NADPH site.

This sequence belongs to the NAD-dependent glycerol-3-phosphate dehydrogenase family.

It localises to the cytoplasm. The catalysed reaction is sn-glycerol 3-phosphate + NAD(+) = dihydroxyacetone phosphate + NADH + H(+). It catalyses the reaction sn-glycerol 3-phosphate + NADP(+) = dihydroxyacetone phosphate + NADPH + H(+). The protein operates within membrane lipid metabolism; glycerophospholipid metabolism. Its function is as follows. Catalyzes the reduction of the glycolytic intermediate dihydroxyacetone phosphate (DHAP) to sn-glycerol 3-phosphate (G3P), the key precursor for phospholipid synthesis. The sequence is that of Glycerol-3-phosphate dehydrogenase [NAD(P)+] from Bradyrhizobium sp. (strain ORS 278).